The primary structure comprises 262 residues: Acyl-[acyl-carrier-protein]--UDP-N-acetylglucosamine O-acyltransferase (262 aa).

Belongs to the transferase hexapeptide repeat family. LpxA subfamily. As to quaternary structure, homotrimer.

Its subcellular location is the cytoplasm. The enzyme catalyses a (3R)-hydroxyacyl-[ACP] + UDP-N-acetyl-alpha-D-glucosamine = a UDP-3-O-[(3R)-3-hydroxyacyl]-N-acetyl-alpha-D-glucosamine + holo-[ACP]. The protein operates within glycolipid biosynthesis; lipid IV(A) biosynthesis; lipid IV(A) from (3R)-3-hydroxytetradecanoyl-[acyl-carrier-protein] and UDP-N-acetyl-alpha-D-glucosamine: step 1/6. In terms of biological role, involved in the biosynthesis of lipid A, a phosphorylated glycolipid that anchors the lipopolysaccharide to the outer membrane of the cell. The chain is Acyl-[acyl-carrier-protein]--UDP-N-acetylglucosamine O-acyltransferase from Vibrio cholerae serotype O1 (strain ATCC 39541 / Classical Ogawa 395 / O395).